A 270-amino-acid chain; its full sequence is MSTEAHPTVQGCLVSFPTPHILLLTLNRPEKRNCISLATSAEIQRLWTWFDTQPALYVAIITGTGESFCAGADLKEWNDLNARGITNEMTAPGLAGLPRRRGSKPIIAAVNGYCLGGGFEMVANCDIVVASENATFGLPEVQRGIAAVAGSLPRLVRVLGKQRAAEIALSGLSFSASQLERWGLVNRVVEHDQLLATAVEIATAISRNSPDSVRVTMEGLHYGWEMASVEEASSALVDQWYAKLMAGENFHEGVRAFVEKRKPQWRPSKL.

The PTS1-type peroxisomal targeting signal signature appears at 268–270 (SKL).

This sequence belongs to the enoyl-CoA hydratase/isomerase family.

It is found in the peroxisome. It functions in the pathway siderophore biosynthesis. Mevalonyl-coenzyme A hydratase; part of the siderophore biosynthetic pathway. Aspergillus fumigatus produces 4 types of siderophores, low-molecular-mass iron chelators, including excreted fusarinine C (FsC) and triacetylfusarinine C (TAFC) for iron uptake and intacellular ferricrocin (FC) for hyphal and hydroxyferricrocin (HFC) for conidial iron distribution and storage. TAFC consists of 3 N(2)-acetyl-N(5)-anhydromevalonyl-N(5)-hydroxyornithine residues cyclically linked by ester bonds; FC is a cyclic hexapeptide with the structure Gly-Ser-Gly-(N(5)-acetyl-N(5)-hydroxyornithine)x3. The biosynthesis of all four siderophores depends on the hydroxylation of ornithine, catalyzed by the monooxygenase sidA. Subsequently, the pathways for biosynthesis of extra- and intracellular siderophores split. For biosynthesis of extracellular siderophores, the transacylase sidF transfers anhydromevalonyl to N(5)-hydroxyornithine. The required anhydromevalonyl-CoA moiety is derived from mevalonate by CoA ligation and dehydration catalyzed by sidI and sidH respectively. The acetylation of N(5)-hydroxyornithine for FC biosynthesis involves the constitutively expressed sidL. FC is hydroxylated to HFC by an as yet uncharacterized enzyme during conidiation. Assembly of fusarinine C (FsC) and FC is catalyzed by two different nonribosomal peptide synthetases (NRPS), sidD and sidC respectively. Subsequently, sidG catalyzes N2-acetylation of FsC for forming TAFC. Both extra- and intracellular siderophores are crucial for growth during iron limitation and virulence. The protein is Mevalonyl-coenzyme A hydratase sidH of Aspergillus fumigatus (strain ATCC MYA-4609 / CBS 101355 / FGSC A1100 / Af293) (Neosartorya fumigata).